The primary structure comprises 223 residues: Peroxynitrite isomerase 1 (223 aa).

The GXWXGXG signature appears at 69 to 75; the sequence is GVWRGEG. Positions 186 and 213 each coordinate heme b.

It belongs to the nitrobindin family. Homodimer. It depends on heme b as a cofactor.

It carries out the reaction peroxynitrite = nitrate. Its pathway is nitrogen metabolism. Functionally, heme-binding protein able to scavenge peroxynitrite and to protect free L-tyrosine against peroxynitrite-mediated nitration, by acting as a peroxynitrite isomerase that converts peroxynitrite to nitrate. Therefore, this protein likely plays a role in peroxynitrite sensing and in the detoxification of reactive nitrogen and oxygen species (RNS and ROS, respectively). Is able to bind nitric oxide (NO) in vitro, but may act as a sensor of peroxynitrite levels in vivo. The sequence is that of Peroxynitrite isomerase 1 from Mycobacterium marinum (strain ATCC BAA-535 / M).